A 139-amino-acid polypeptide reads, in one-letter code: Protein archease (139 aa).

Ca(2+) contacts are provided by Asp-12, Asp-138, and Ile-139.

It belongs to the archease family.

In terms of biological role, activates the tRNA-splicing ligase complex by facilitating the enzymatic turnover of catalytic subunit RtcB. Acts by promoting the guanylylation of RtcB, a key intermediate step in tRNA ligation. Can also alter the NTP specificity of RtcB such that ATP, dGTP or ITP is used efficiently. This Saccharolobus islandicus (strain Y.N.15.51 / Yellowstone #2) (Sulfolobus islandicus) protein is Protein archease.